Reading from the N-terminus, the 932-residue chain is Beta-mannosidase A (932 aa).

The signal sequence occupies residues 1-21 (MRIREQTILALLSPGLPPVTG). N-linked (GlcNAc...) asparagine glycans are attached at residues N40, N248, N283, N317, and N348. The active-site Proton donor is E480. N-linked (GlcNAc...) asparagine glycans are attached at residues N538, N609, N632, N659, N739, N762, and N791.

The protein belongs to the glycosyl hydrolase 2 family. Beta-mannosidase A subfamily. As to quaternary structure, homodimer.

It is found in the secreted. The catalysed reaction is Hydrolysis of terminal, non-reducing beta-D-mannose residues in beta-D-mannosides.. It participates in glycan metabolism; N-glycan degradation. In terms of biological role, exoglycosidase that cleaves the single beta-linked mannose residue from the non-reducing end of beta-mannosidic oligosaccharides of various complexity and length. Involved in the degradation of polymeric mannan and galactomannan. The protein is Beta-mannosidase A (mndA) of Aspergillus clavatus (strain ATCC 1007 / CBS 513.65 / DSM 816 / NCTC 3887 / NRRL 1 / QM 1276 / 107).